Reading from the N-terminus, the 484-residue chain is ATP synthase subunit beta, chloroplastic (484 aa).

163–170 (GGAGVGKT) contributes to the ATP binding site.

The protein belongs to the ATPase alpha/beta chains family. F-type ATPases have 2 components, CF(1) - the catalytic core - and CF(0) - the membrane proton channel. CF(1) has five subunits: alpha(3), beta(3), gamma(1), delta(1), epsilon(1). CF(0) has four main subunits: a(1), b(1), b'(1) and c(9-12).

The protein resides in the plastid. The protein localises to the chloroplast thylakoid membrane. It carries out the reaction ATP + H2O + 4 H(+)(in) = ADP + phosphate + 5 H(+)(out). In terms of biological role, produces ATP from ADP in the presence of a proton gradient across the membrane. The catalytic sites are hosted primarily by the beta subunits. This is ATP synthase subunit beta, chloroplastic from Stigeoclonium helveticum (Green alga).